The following is a 349-amino-acid chain: UDP-N-acetylenolpyruvoylglucosamine reductase (349 aa).

The region spanning 25–197 (GIAARARFAA…VAVTFRLPKQ (173 aa)) is the FAD-binding PCMH-type domain. Arg173 is an active-site residue. Ser249 acts as the Proton donor in catalysis. Glu345 is an active-site residue.

This sequence belongs to the MurB family. Requires FAD as cofactor.

The protein resides in the cytoplasm. The enzyme catalyses UDP-N-acetyl-alpha-D-muramate + NADP(+) = UDP-N-acetyl-3-O-(1-carboxyvinyl)-alpha-D-glucosamine + NADPH + H(+). Its pathway is cell wall biogenesis; peptidoglycan biosynthesis. In terms of biological role, cell wall formation. This is UDP-N-acetylenolpyruvoylglucosamine reductase from Burkholderia cenocepacia (strain HI2424).